A 513-amino-acid chain; its full sequence is Cytochrome P450 1A2 (513 aa).

An O-linked (GlcNAc) serine glycan is attached at serine 68. Cysteine 456 serves as a coordination point for heme.

It belongs to the cytochrome P450 family. As to quaternary structure, interacts with PGRMC1; the interaction requires PGRMC1 homodimerization. Requires heme as cofactor.

It localises to the endoplasmic reticulum membrane. Its subcellular location is the microsome membrane. The enzyme catalyses an organic molecule + reduced [NADPH--hemoprotein reductase] + O2 = an alcohol + oxidized [NADPH--hemoprotein reductase] + H2O + H(+). The catalysed reaction is 17beta-estradiol + reduced [NADPH--hemoprotein reductase] + O2 = 2-hydroxy-17beta-estradiol + oxidized [NADPH--hemoprotein reductase] + H2O + H(+). It carries out the reaction 17beta-estradiol + reduced [NADPH--hemoprotein reductase] + O2 = 4-hydroxy-17beta-estradiol + oxidized [NADPH--hemoprotein reductase] + H2O + H(+). It catalyses the reaction estrone + reduced [NADPH--hemoprotein reductase] + O2 = 2-hydroxyestrone + oxidized [NADPH--hemoprotein reductase] + H2O + H(+). The enzyme catalyses estrone + reduced [NADPH--hemoprotein reductase] + O2 = 4-hydroxyestrone + oxidized [NADPH--hemoprotein reductase] + H2O + H(+). The catalysed reaction is cholesterol + reduced [NADPH--hemoprotein reductase] + O2 = 25-hydroxycholesterol + oxidized [NADPH--hemoprotein reductase] + H2O + H(+). It carries out the reaction all-trans-retinol + reduced [NADPH--hemoprotein reductase] + O2 = all-trans-retinal + oxidized [NADPH--hemoprotein reductase] + 2 H2O + H(+). It catalyses the reaction all-trans-retinal + reduced [NADPH--hemoprotein reductase] + O2 = all-trans-retinoate + oxidized [NADPH--hemoprotein reductase] + H2O + 2 H(+). The enzyme catalyses (5Z,8Z,11Z,14Z)-eicosatetraenoate + reduced [NADPH--hemoprotein reductase] + O2 = (14R,15S)-epoxy-(5Z,8Z,11Z)-eicosatrienoate + oxidized [NADPH--hemoprotein reductase] + H2O + H(+). The catalysed reaction is (5Z,8Z,11Z,14Z)-eicosatetraenoate + reduced [NADPH--hemoprotein reductase] + O2 = (14S,15R)-epoxy-(5Z,8Z,11Z)-eicosatrienoate + oxidized [NADPH--hemoprotein reductase] + H2O + H(+). It carries out the reaction (5Z,8Z,11Z,14Z,17Z)-eicosapentaenoate + reduced [NADPH--hemoprotein reductase] + O2 = (17R,18S)-epoxy-(5Z,8Z,11Z,14Z)-eicosatetraenoate + oxidized [NADPH--hemoprotein reductase] + H2O + H(+). It catalyses the reaction (4Z,7Z,10Z,13Z,16Z,19Z)-docosahexaenoate + reduced [NADPH--hemoprotein reductase] + O2 = (19R,20S)-epoxy-(4Z,7Z,10Z,13Z,16Z)-docosapentaenoate + oxidized [NADPH--hemoprotein reductase] + H2O + H(+). The enzyme catalyses (5S)-hydroperoxy-(6E,8Z,11Z,14Z)-eicosatetraenoate = 5-oxo-(6E,8Z,11Z,14Z)-eicosatetraenoate + H2O. The catalysed reaction is (12S)-hydroperoxy-(5Z,8Z,10E,14Z)-eicosatetraenoate = 12-oxo-(5Z,8Z,10E,14Z)-eicosatetraenoate + H2O. It carries out the reaction (15S)-hydroperoxy-(5Z,8Z,11Z,13E)-eicosatetraenoate = 15-oxo-(5Z,8Z,11Z,13E)-eicosatetraenoate + H2O. It catalyses the reaction (13S)-hydroperoxy-(9Z,11E)-octadecadienoate = 13-oxo-(9Z,11E)-octadecadienoate + H2O. The enzyme catalyses (5Z,8Z,11Z,14Z)-eicosatetraenoate + reduced [NADPH--hemoprotein reductase] + O2 = 13-hydroxy-(5Z,8Z,11Z,14Z)-eicosatetraenoate + oxidized [NADPH--hemoprotein reductase] + H2O + H(+). The catalysed reaction is (5Z,8Z,11Z,14Z)-eicosatetraenoate + reduced [NADPH--hemoprotein reductase] + O2 = 19-hydroxy-(5Z,8Z,11Z,14Z)-eicosatetraenoate + oxidized [NADPH--hemoprotein reductase] + H2O + H(+). It carries out the reaction (9Z,12Z)-octadecadienoate + reduced [NADPH--hemoprotein reductase] + O2 = 11-hydroxy-(9Z,12Z)-octadecadienoate + oxidized [NADPH--hemoprotein reductase] + H2O + H(+). It participates in cofactor metabolism; retinol metabolism. Its pathway is steroid metabolism; cholesterol metabolism. It functions in the pathway lipid metabolism; arachidonate metabolism. Functionally, a cytochrome P450 monooxygenase involved in the metabolism of various endogenous substrates, including fatty acids, steroid hormones and vitamins. Mechanistically, uses molecular oxygen inserting one oxygen atom into a substrate, and reducing the second into a water molecule, with two electrons provided by NADPH via cytochrome P450 reductase (NADPH--hemoprotein reductase). Catalyzes the hydroxylation of carbon-hydrogen bonds. Exhibits high catalytic activity for the formation of hydroxyestrogens from estrone (E1) and 17beta-estradiol (E2), namely 2-hydroxy E1 and E2. Metabolizes cholesterol toward 25-hydroxycholesterol, a physiological regulator of cellular cholesterol homeostasis. May act as a major enzyme for all-trans retinoic acid biosynthesis in the liver. Catalyzes two successive oxidative transformation of all-trans retinol to all-trans retinal and then to the active form all-trans retinoic acid. Primarily catalyzes stereoselective epoxidation of the last double bond of polyunsaturated fatty acids (PUFA), displaying a strong preference for the (R,S) stereoisomer. Catalyzes bisallylic hydroxylation and omega-1 hydroxylation of PUFA. May also participate in eicosanoids metabolism by converting hydroperoxide species into oxo metabolites (lipoxygenase-like reaction, NADPH-independent). Plays a role in the oxidative metabolism of xenobiotics. Catalyzes the N-hydroxylation of heterocyclic amines and the O-deethylation of phenacetin. Metabolizes caffeine via N3-demethylation. This is Cytochrome P450 1A2 (Cyp1a2) from Rattus norvegicus (Rat).